Reading from the N-terminus, the 280-residue chain is Para-Rep C2 (280 aa).

The 97-residue stretch at 1–97 (MARRYCFTLN…ETLISEIGIP (97 aa)) folds into the CRESS-DNA virus Rep endonuclease domain. An RCR-1 motif is present at residues 6 to 9 (CFTL). A divalent metal cation is bound by residues glutamate 37 and histidine 45. The short motif at 45–47 (HLQ) is the RCR-2 element. Positions 54 to 75 (NKIRLGGLKKKFGNRAHWEIAR) match the Nuclear localization signal motif. Catalysis depends on tyrosine 84, which acts as the For DNA cleavage activity. Positions 84 to 87 (YCCK) match the RCR-3 motif. A Nuclear localization signal motif is present at residues 97 to 103 (PVMKGSN). 172 to 180 (GSDGGEGKT) is a binding site for ATP.

Belongs to the nanoviridea/circoviridae replication-associated protein family. In terms of assembly, homooligomer (Potential). Rep binds to repeated DNA motifs (iterons). Requires Mg(2+) as cofactor. Mn(2+) is required as a cofactor.

It localises to the host nucleus. The enzyme catalyses ATP + H2O = ADP + phosphate + H(+). Functionally, initiates and terminates the replication only of its own subviral DNA molecule. The closed circular ssDNA genome is first converted to a superhelical dsDNA. Rep binds a specific hairpin at the genome origin of replication. Introduces an endonucleolytic nick within the intergenic region of the genome, thereby initiating the rolling circle replication (RCR). Following cleavage, binds covalently to the 5'-phosphate of DNA as a tyrosyl ester. The cleavage gives rise to a free 3'-OH that serves as a primer for the cellular DNA polymerase. The polymerase synthesizes the (+) strand DNA by rolling circle mechanism. After one round of replication, a Rep-catalyzed nucleotidyl transfer reaction releases a circular single-stranded virus genome, thereby terminating the replication. Displays origin-specific DNA cleavage, nucleotidyl transferase, ATPase and helicase activities. The chain is Para-Rep C2 (C2) from Subterranean clover stunt C2 alphasatellite (SCSC2A).